The following is a 1916-amino-acid chain: Diacylglycerol kinase eta (1916 aa).

Residues 1 to 36 (MAHIKLDTLDVVQRPGTTRRSNSNSGRSSACSSGSL) are disordered. Positions 19-36 (RRSNSNSGRSSACSSGSL) are enriched in low complexity. Residues 82–175 (AIIKEGFLLK…WLGSLKTATT (94 aa)) form the PH domain. 2 Phorbol-ester/DAG-type zinc fingers span residues 195 to 245 (HHHW…IANC) and 268 to 319 (PHQW…AVAC). Residues 350–486 (GNFSPLLVFV…DRWSIMVFEK (137 aa)) form the DAGKc domain. A compositionally biased stretch (basic and acidic residues) spans 623–644 (DEINTKERRSSRSLRSSEKEAL). 4 disordered regions span residues 623 to 648 (DEINTKERRSSRSLRSSEKEALQSRA), 846 to 874 (DRGKEGTEEKKGDIEKEKSSGTDVEKEDN), 1018 to 1067 (TLCS…DDNP), and 1183 to 1214 (TSTSPTKKSGHGQDISVVVRPPTPLRGDSVKP). One can recognise an SAM domain in the interval 1853–1916 (WSVNEVVTWL…LQAIKDLSEN (64 aa)).

It belongs to the eukaryotic diacylglycerol kinase family.

The protein localises to the cytoplasm. The catalysed reaction is a 1,2-diacyl-sn-glycerol + ATP = a 1,2-diacyl-sn-glycero-3-phosphate + ADP + H(+). Functionally, phosphorylates diacylglycerol (DAG) to generate phosphatidic acid (PA). The protein is Diacylglycerol kinase eta of Drosophila ananassae (Fruit fly).